The following is a 151-amino-acid chain: Large ribosomal subunit protein uL13 (151 aa).

This sequence belongs to the universal ribosomal protein uL13 family. Part of the 50S ribosomal subunit.

This protein is one of the early assembly proteins of the 50S ribosomal subunit, although it is not seen to bind rRNA by itself. It is important during the early stages of 50S assembly. This Picosynechococcus sp. (strain ATCC 27264 / PCC 7002 / PR-6) (Agmenellum quadruplicatum) protein is Large ribosomal subunit protein uL13.